A 340-amino-acid polypeptide reads, in one-letter code: Methionine import ATP-binding protein MetN (340 aa).

Residues 6 to 245 form the ABC transporter domain; it reads IEFEGITKVF…PQTNVAKRFV (240 aa). ATP is bound at residue 42 to 49; that stretch reads GYSGAGKS.

This sequence belongs to the ABC transporter superfamily. Methionine importer (TC 3.A.1.24) family. In terms of assembly, the complex is composed of two ATP-binding proteins (MetN), two transmembrane proteins (MetI) and a solute-binding protein (MetQ).

The protein localises to the cell membrane. It catalyses the reaction L-methionine(out) + ATP + H2O = L-methionine(in) + ADP + phosphate + H(+). It carries out the reaction D-methionine(out) + ATP + H2O = D-methionine(in) + ADP + phosphate + H(+). Part of the ABC transporter complex MetNIQ involved in methionine import. Responsible for energy coupling to the transport system. This Corynebacterium diphtheriae (strain ATCC 700971 / NCTC 13129 / Biotype gravis) protein is Methionine import ATP-binding protein MetN.